A 401-amino-acid polypeptide reads, in one-letter code: Enolase (401 aa).

Gln-154 serves as a coordination point for (2R)-2-phosphoglycerate. The active-site Proton donor is the Glu-197. 3 residues coordinate Mg(2+): Asp-233, Glu-274, and Asp-301. Residues Lys-326, Arg-355, Ser-356, and Lys-377 each coordinate (2R)-2-phosphoglycerate. Catalysis depends on Lys-326, which acts as the Proton acceptor.

The protein belongs to the enolase family. It depends on Mg(2+) as a cofactor.

It is found in the cytoplasm. It localises to the secreted. Its subcellular location is the cell surface. The enzyme catalyses (2R)-2-phosphoglycerate = phosphoenolpyruvate + H2O. It participates in carbohydrate degradation; glycolysis; pyruvate from D-glyceraldehyde 3-phosphate: step 4/5. Catalyzes the reversible conversion of 2-phosphoglycerate (2-PG) into phosphoenolpyruvate (PEP). It is essential for the degradation of carbohydrates via glycolysis. This Thermoplasma acidophilum (strain ATCC 25905 / DSM 1728 / JCM 9062 / NBRC 15155 / AMRC-C165) protein is Enolase.